Reading from the N-terminus, the 62-residue chain is uncharacterized protein (62 aa).

It localises to the plastid. It is found in the chloroplast. This is an uncharacterized protein from Chlamydomonas reinhardtii (Chlamydomonas smithii).